A 516-amino-acid polypeptide reads, in one-letter code: tRNA-guanine(15) transglycosylase (516 aa).

Asp-93 functions as the Nucleophile in the catalytic mechanism. Substrate is bound by residues Asp-128 and Ala-196. Zn(2+) is bound by residues Cys-279, Cys-281, and Cys-284. Low complexity predominate over residues 488–502 (LSAVSERLGDEASVG). Residues 488–516 (LSAVSERLGDEASVGGDDGDDGGSASSAE) are disordered.

The protein belongs to the archaeosine tRNA-ribosyltransferase family. Zn(2+) is required as a cofactor.

It catalyses the reaction guanosine(15) in tRNA + 7-cyano-7-deazaguanine = 7-cyano-7-carbaguanosine(15) in tRNA + guanine. Its pathway is tRNA modification; archaeosine-tRNA biosynthesis. Its function is as follows. Exchanges the guanine residue with 7-cyano-7-deazaguanine (preQ0) at position 15 in the dihydrouridine loop (D-loop) of archaeal tRNAs. This chain is tRNA-guanine(15) transglycosylase, found in Haloferax volcanii (strain ATCC 29605 / DSM 3757 / JCM 8879 / NBRC 14742 / NCIMB 2012 / VKM B-1768 / DS2) (Halobacterium volcanii).